A 329-amino-acid polypeptide reads, in one-letter code: POU domain, class 5, transcription factor 2 (329 aa).

Residues 1–14 show a composition bias toward polar residues; it reads MAGRRSSNVFPLSG. Residues 1–24 form a disordered region; it reads MAGRRSSNVFPLSGNSGGGLEVDT. One can recognise a POU-specific domain in the interval 107–181; that stretch reads DVSAIQKEME…LLKMWLEEVD (75 aa). The homeobox DNA-binding region spans 199–258; it reads RKRRRASRERRIGSNLEKLFLQCPEPTPQQISYIAGRLRLQKDLVQVWFSNRSQMGSWPT.

This sequence belongs to the POU transcription factor family. Class-5 subfamily. As to expression, in adult brain, expressed in the olfactory bulb, becoming specifically concentrated in the mitral cell layer. Also found in the pyramidal cell layer of the hippocampus, in the granule cell layer of the cerebellum and in the cortex.

It localises to the nucleus. In terms of biological role, transcription factor that binds preferentially to the octamer motif (5'-ATGTTAAT-3'). May exert a regulatory function in meiotic events that are required for terminal differentiation of male germ cell. The sequence is that of POU domain, class 5, transcription factor 2 (Pou5f2) from Mus musculus (Mouse).